A 183-amino-acid chain; its full sequence is Peptidyl-tRNA hydrolase (183 aa).

Residue Y14 participates in tRNA binding. H19 serves as the catalytic Proton acceptor. Y64, N66, and N112 together coordinate tRNA.

Belongs to the PTH family. Monomer.

The protein resides in the cytoplasm. It catalyses the reaction an N-acyl-L-alpha-aminoacyl-tRNA + H2O = an N-acyl-L-amino acid + a tRNA + H(+). Its function is as follows. Hydrolyzes ribosome-free peptidyl-tRNAs (with 1 or more amino acids incorporated), which drop off the ribosome during protein synthesis, or as a result of ribosome stalling. In terms of biological role, catalyzes the release of premature peptidyl moieties from peptidyl-tRNA molecules trapped in stalled 50S ribosomal subunits, and thus maintains levels of free tRNAs and 50S ribosomes. The protein is Peptidyl-tRNA hydrolase of Anaplasma phagocytophilum (strain HZ).